Here is a 150-residue protein sequence, read N- to C-terminus: Early 4 ORF6/7 control protein (150 aa).

The disordered stretch occupies residues 1 to 31 (MTTSGVPFGMTLRPTRSRLSRRTPYSRDRLP). Residues 1-58 (MTTSGVPFGMTLRPTRSRLSRRTPYSRDRLPPFETETRATILEDHPLLPECNTLTMHN) carry the Nuclear localization signal motif.

The protein belongs to the adenoviridae E4-orf6/7 family. Interacts with host E2F proteins.

The protein localises to the host nucleus. Modulates viral and host transcriptional activity to promote viral genome replication. Stimulates viral E2a promoter activity by binding and inducing dimerization of host E2F. During viral infection E1A protein binds to cellular retinablastoma (RB) family members and dissociates these repressors from a complex with E2F proteins. Free E2F is then bound to E4orf6/7 which leads to transactivation of viral E2 promoter, and cellular promoters such as E2F-1 promoter. Activation of cellular E2F targets promote cell cycle S phase and thereby possibly favorises viral DNA replication process. This Human adenovirus C serotype 2 (HAdV-2) protein is Early 4 ORF6/7 control protein.